We begin with the raw amino-acid sequence, 124 residues long: Small ribosomal subunit protein uS12 (124 aa).

A disordered region spans residues 1–30; the sequence is MPTIQQLVRKGRQDKVAKTKTAALKGSPQR. D89 is subject to 3-methylthioaspartic acid. A disordered region spans residues 102–124; that stretch reads ADTQGVKNRKQARSRYGAKKEKS. Residues 108-118 are compositionally biased toward basic residues; the sequence is KNRKQARSRYG.

The protein belongs to the universal ribosomal protein uS12 family. In terms of assembly, part of the 30S ribosomal subunit. Contacts proteins S8 and S17. May interact with IF1 in the 30S initiation complex.

Its function is as follows. With S4 and S5 plays an important role in translational accuracy. Functionally, interacts with and stabilizes bases of the 16S rRNA that are involved in tRNA selection in the A site and with the mRNA backbone. Located at the interface of the 30S and 50S subunits, it traverses the body of the 30S subunit contacting proteins on the other side and probably holding the rRNA structure together. The combined cluster of proteins S8, S12 and S17 appears to hold together the shoulder and platform of the 30S subunit. In Saccharopolyspora erythraea (strain ATCC 11635 / DSM 40517 / JCM 4748 / NBRC 13426 / NCIMB 8594 / NRRL 2338), this protein is Small ribosomal subunit protein uS12.